We begin with the raw amino-acid sequence, 264 residues long: NADH-quinone oxidoreductase subunit I 2 (264 aa).

2 consecutive 4Fe-4S ferredoxin-type domains span residues 57–86 (GFLEVDSGICTGCQACERACPIGCIQISLE) and 98–127 (TQFDIDEAKCMFCGLCVEPCPTGSIQHTRE). The [4Fe-4S] cluster site is built by cysteine 66, cysteine 69, cysteine 72, cysteine 76, cysteine 107, cysteine 110, cysteine 113, and cysteine 117. Residues 183–264 (APQFLPPEPP…AAPAANPESK (82 aa)) form a disordered region. Residues 197–264 (AKPAAKAAPA…AAPAANPESK (68 aa)) show a composition bias toward low complexity.

The protein belongs to the complex I 23 kDa subunit family. In terms of assembly, NDH-1 is composed of 14 different subunits. Subunits NuoA, H, J, K, L, M, N constitute the membrane sector of the complex. The cofactor is [4Fe-4S] cluster.

The protein resides in the cell inner membrane. It carries out the reaction a quinone + NADH + 5 H(+)(in) = a quinol + NAD(+) + 4 H(+)(out). In terms of biological role, NDH-1 shuttles electrons from NADH, via FMN and iron-sulfur (Fe-S) centers, to quinones in the respiratory chain. The immediate electron acceptor for the enzyme in this species is believed to be ubiquinone. Couples the redox reaction to proton translocation (for every two electrons transferred, four hydrogen ions are translocated across the cytoplasmic membrane), and thus conserves the redox energy in a proton gradient. This is NADH-quinone oxidoreductase subunit I 2 from Anaeromyxobacter dehalogenans (strain 2CP-C).